The sequence spans 726 residues: MAAAKWLIASLAFASSGLAFTPEDFISAPRRGEAIPDPKGELAVFHVSKYNFDKKDRPSGWNLLNLKNGDISVLTTDSDVSEITWLGDGTKVVYVNGTDSVKGGVGIWISDAKNFGNAYKAGSVNGAFSGLKLAKSGDKINFVGYGQSTTKGDLYNEAAAKEAVSSARIYDSLFVRHWDTYVSTQFNAVFSGALTKNGDKYSFDGKLKNLVQPVKYAESPYPPFGGSGDYDLSSDGKTVAFMSKAPELPKANLTTSYIFLVPHDGSRVAEPINKRNGPRTPQGIEGASSSPVFSPDGKRIAYLQMATKNYESDRRVIHIAEVGSNKPVQRIASNWDRSPEAVKWSSDGRTLYVTAEDHATGKLFTLPADARDNHKPEVVKHDGSVSSFYFVGSSKSVLISGNSLWSNALYQVATPGRPNRKLFYANEHDPELKGLGPNDIEPLWVDGARTKIHSWIVKPTGFDKNKVYPLAFLIHGGPQGSWGDNWSTRWNPRVWADQGYVVVAPNPTGSTGFGQKLTDDITNDWGGAPYKDLVKIWEHVHNNIKYIDTDNGIAAGASFGGFMVNWIQGQDLGRKFKALVSHDGTFVGSSKIGTDELFFIEHDFNGTFFEARQNYDRWDCSKPELVAKWSTPQLVVHNDFDFRLSVAEGVGLFNVLQEKGVPSRFLNFPDETHWVTKPENSLVWHQQVLGWVNKWSGINKSNPKSIKLSDCPIEVVDHEAHSYFDY.

Residues 1–19 (MAAAKWLIASLAFASSGLA) form the signal peptide. N-linked (GlcNAc...) asparagine glycosylation is found at asparagine 96 and asparagine 252. The interval 269-291 (AEPINKRNGPRTPQGIEGASSSP) is disordered. N-linked (GlcNAc...) asparagine glycosylation occurs at asparagine 485. Serine 558 serves as the catalytic Charge relay system. The N-linked (GlcNAc...) asparagine glycan is linked to asparagine 605. Active-site charge relay system residues include aspartate 641 and histidine 673. The N-linked (GlcNAc...) asparagine glycan is linked to asparagine 699.

The protein belongs to the peptidase S9C family.

The protein resides in the secreted. In terms of biological role, extracellular dipeptidyl-peptidase which removes N-terminal dipeptides sequentially from polypeptides having unsubstituted N-termini. Contributes to pathogenicity. This is Probable dipeptidyl-peptidase 5 (DPP5) from Arthroderma benhamiae (strain ATCC MYA-4681 / CBS 112371) (Trichophyton mentagrophytes).